The primary structure comprises 355 residues: DNA polymerase IV (355 aa).

The region spanning 7 to 188 (IIHIDMDCFY…LPVRKLFGVG (182 aa)) is the UmuC domain. The Mg(2+) site is built by Asp11 and Asp106. Residue Glu107 is part of the active site.

It belongs to the DNA polymerase type-Y family. As to quaternary structure, monomer. The cofactor is Mg(2+).

Its subcellular location is the cytoplasm. The catalysed reaction is DNA(n) + a 2'-deoxyribonucleoside 5'-triphosphate = DNA(n+1) + diphosphate. Poorly processive, error-prone DNA polymerase involved in untargeted mutagenesis. Copies undamaged DNA at stalled replication forks, which arise in vivo from mismatched or misaligned primer ends. These misaligned primers can be extended by PolIV. Exhibits no 3'-5' exonuclease (proofreading) activity. May be involved in translesional synthesis, in conjunction with the beta clamp from PolIII. The protein is DNA polymerase IV of Legionella pneumophila (strain Lens).